A 78-amino-acid chain; its full sequence is Glycophorin-E (78 aa).

An N-terminal signal peptide occupies residues 1–19 (MYGKIIFVLLLSGIVSISA). At 20 to 52 (SSTTGVAMHTSTSSSVTKSYISSQTNGITLINW) the chain is on the extracellular side. Residues 53-73 (WAMARVIFEVMLVVVGMIILI) form a helical membrane-spanning segment. Residues 74–78 (SYCIR) lie on the Cytoplasmic side of the membrane.

Belongs to the glycophorin-A family. The N-terminal extracellular domain is heavily glycosylated on serine and threonine residues. Erythrocytes.

Its subcellular location is the membrane. In terms of biological role, this protein is a minor sialoglycoprotein in human erythrocyte membranes. In Homo sapiens (Human), this protein is Glycophorin-E (GYPE).